A 66-amino-acid polypeptide reads, in one-letter code: Large ribosomal subunit protein bL35 (66 aa).

The protein belongs to the bacterial ribosomal protein bL35 family. As to quaternary structure, part of the 50S ribosomal subunit. Contacts proteins L15 and L33.

Its function is as follows. Binds the 23S rRNA. The protein is Large ribosomal subunit protein bL35 (rpmI) of Deinococcus radiodurans (strain ATCC 13939 / DSM 20539 / JCM 16871 / CCUG 27074 / LMG 4051 / NBRC 15346 / NCIMB 9279 / VKM B-1422 / R1).